Consider the following 593-residue polypeptide: Inactive metallocarboxypeptidase ECM14 (593 aa).

Positions 1 to 22 (MHFSVRLSLLLTLASSLPLVSA) are cleaved as a signal peptide. A propeptide spanning residues 23 to 184 (IPQHEDQAYT…QTIYESYPKT (162 aa)) is cleaved from the precursor. The tract at residues 180 to 210 (SYPKTNPSSPSQQGPTTRRFSPSASTSKTKP) is disordered. The span at 182-210 (PKTNPSSPSQQGPTTRRFSPSASTSKTKP) shows a compositional bias: polar residues. The Peptidase M14 domain maps to 220–546 (DYQPLSVLLP…RAMVAMGKFL (327 aa)). Zn(2+) contacts are provided by His285 and Glu288. Residues 285-288 (HARE), Arg343, and 360-361 (DH) contribute to the substrate site. Cys354 and Cys377 are oxidised to a cystine. N-linked (GlcNAc...) asparagine glycosylation occurs at Asn370. His417 provides a ligand contact to Zn(2+). 418 to 419 (SY) provides a ligand contact to substrate. Residues 557-593 (NGPHAAEETQNYDDDFEEDEAEEDSDVFRAQGDDMSS) are disordered. The segment covering 566–581 (QNYDDDFEEDEAEEDS) has biased composition (acidic residues).

The protein belongs to the peptidase M14 family. Zn(2+) is required as a cofactor.

It is found in the vacuole. Its subcellular location is the secreted. Inactive carboxypeptidase that may play a role in cell wall organization and biogenesis. The sequence is that of Inactive metallocarboxypeptidase ECM14 (ECM14) from Arthroderma gypseum (strain ATCC MYA-4604 / CBS 118893) (Microsporum gypseum).